A 550-amino-acid polypeptide reads, in one-letter code: CCR4-NOT transcription complex subunit 6-like-A (550 aa).

Residues M1 to K148 form a required for interaction with cnot1, cnot3 and cnot7 region. LRR repeat units lie at residues H52 to L73, N75 to V96, S98 to F120, and R121 to P143. Residues M153–R550 form a nuclease domain region. Residue E235 participates in Mg(2+) binding. Substrate is bound by residues E235, E271, H355, and P360. D405 contacts Mg(2+). Catalysis depends on D405, which acts as the Proton donor/acceptor. Positions 407, 474, and 479 each coordinate substrate.

It belongs to the CCR4/nocturin family. As to quaternary structure, component of the CCR4-NOT complex. It depends on Mg(2+) as a cofactor.

It is found in the cytoplasm. Its subcellular location is the nucleus. The catalysed reaction is Exonucleolytic cleavage of poly(A) to 5'-AMP.. Functionally, poly(A) nuclease with 3'-5' RNase activity. Catalytic component of the CCR4-NOT complex which is one of the major cellular mRNA deadenylases and is linked to various cellular processes including bulk mRNA degradation, miRNA-mediated repression, translational repression during translational initiation and general transcription regulation. Additional complex functions may be a consequence of its influence on mRNA expression. The chain is CCR4-NOT transcription complex subunit 6-like-A (cnot6l-a) from Xenopus laevis (African clawed frog).